We begin with the raw amino-acid sequence, 811 residues long: Leucine--tRNA ligase (811 aa).

The 'HIGH' region signature appears at Pro-40–His-50. The 'KMSKS' region motif lies at Lys-579 to Ser-583. Residue Lys-582 coordinates ATP.

The protein belongs to the class-I aminoacyl-tRNA synthetase family.

Its subcellular location is the cytoplasm. It carries out the reaction tRNA(Leu) + L-leucine + ATP = L-leucyl-tRNA(Leu) + AMP + diphosphate. This is Leucine--tRNA ligase from Campylobacter fetus subsp. fetus (strain 82-40).